Reading from the N-terminus, the 284-residue chain is Signal peptidase I (284 aa).

Residues 4–22 traverse the membrane as a helical segment; that stretch reads NFPLLLVIAVAVCGLLALL. At 23-58 the chain is on the cytoplasmic side; it reads DLVFFAPRRRSAIASYQGSVSQPDAVVIEKLNKEPL. A helical membrane pass occupies residues 59-77; sequence LVEYGKSFFPVLFIVLVLR. At 78 to 284 the chain is on the periplasmic side; sequence SFLVEPFQIP…PNFSRVGLIK (207 aa). Catalysis depends on residues S90 and K145.

The protein belongs to the peptidase S26 family.

Its subcellular location is the cell inner membrane. The enzyme catalyses Cleavage of hydrophobic, N-terminal signal or leader sequences from secreted and periplasmic proteins.. The protein is Signal peptidase I (lepB) of Pseudomonas fluorescens.